The chain runs to 514 residues: ATP synthase subunit alpha (514 aa).

170–177 contributes to the ATP binding site; that stretch reads GDRQIGKT.

The protein belongs to the ATPase alpha/beta chains family. F-type ATPases have 2 components, CF(1) - the catalytic core - and CF(0) - the membrane proton channel. CF(1) has five subunits: alpha(3), beta(3), gamma(1), delta(1), epsilon(1). CF(0) has three main subunits: a(1), b(2) and c(9-12). The alpha and beta chains form an alternating ring which encloses part of the gamma chain. CF(1) is attached to CF(0) by a central stalk formed by the gamma and epsilon chains, while a peripheral stalk is formed by the delta and b chains.

Its subcellular location is the cell inner membrane. The enzyme catalyses ATP + H2O + 4 H(+)(in) = ADP + phosphate + 5 H(+)(out). Produces ATP from ADP in the presence of a proton gradient across the membrane. The alpha chain is a regulatory subunit. This chain is ATP synthase subunit alpha, found in Pseudomonas fluorescens (strain Pf0-1).